The following is a 451-amino-acid chain: UPF0210 protein Cbei_2352 (451 aa).

This sequence belongs to the UPF0210 family. In terms of assembly, homodimer.

The polypeptide is UPF0210 protein Cbei_2352 (Clostridium beijerinckii (strain ATCC 51743 / NCIMB 8052) (Clostridium acetobutylicum)).